The following is a 165-amino-acid chain: Nucleotide-binding protein A9601_05361 (165 aa).

Belongs to the YajQ family.

Its function is as follows. Nucleotide-binding protein. The polypeptide is Nucleotide-binding protein A9601_05361 (Prochlorococcus marinus (strain AS9601)).